A 364-amino-acid polypeptide reads, in one-letter code: Aminomethyltransferase (364 aa).

It belongs to the GcvT family. As to quaternary structure, the glycine cleavage system is composed of four proteins: P, T, L and H.

The enzyme catalyses N(6)-[(R)-S(8)-aminomethyldihydrolipoyl]-L-lysyl-[protein] + (6S)-5,6,7,8-tetrahydrofolate = N(6)-[(R)-dihydrolipoyl]-L-lysyl-[protein] + (6R)-5,10-methylene-5,6,7,8-tetrahydrofolate + NH4(+). In terms of biological role, the glycine cleavage system catalyzes the degradation of glycine. The protein is Aminomethyltransferase of Anoxybacillus flavithermus (strain DSM 21510 / WK1).